We begin with the raw amino-acid sequence, 94 residues long: Large ribosomal subunit protein bL25 (94 aa).

This sequence belongs to the bacterial ribosomal protein bL25 family. Part of the 50S ribosomal subunit; part of the 5S rRNA/L5/L18/L25 subcomplex. Contacts the 5S rRNA. Binds to the 5S rRNA independently of L5 and L18.

Functionally, this is one of the proteins that binds to the 5S RNA in the ribosome where it forms part of the central protuberance. The sequence is that of Large ribosomal subunit protein bL25 from Proteus mirabilis (strain HI4320).